The sequence spans 297 residues: GTP-binding protein REM 1 (297 aa).

Residues 1–10 (MTLNTQQEAK) show a composition bias toward polar residues. Residues 1-73 (MTLNTQQEAK…DGWSSESSDS (73 aa)) form a disordered region. Residue Ser51 is modified to Phosphoserine. Low complexity predominate over residues 64 to 73 (DGWSSESSDS). Residues 87-94 (GDPGVGKT) and 194-197 (NKAD) contribute to the GTP site. The segment at 267–286 (ARRFLARLTARSARRRALKA) is calmodulin-binding.

It belongs to the small GTPase superfamily. RGK family. In terms of assembly, in vitro, interacts with calmodulin in a calcium-dependent manner. Interacts 14-3-3 family members including YWHAE, YWHAH, YWHAQ, YWHAZ in a phosphorylation-dependent manner. High expression in cardiac muscle. Moderate expression in lung, skeletal muscle and kidney. Low levels in spleen and brain.

Promotes endothelial cell sprouting and actin cytoskeletal reorganization. May be involved in angiogenesis. May function in Ca(2+) signaling. This Mus musculus (Mouse) protein is GTP-binding protein REM 1 (Rem1).